A 105-amino-acid polypeptide reads, in one-letter code: MICOS complex subunit Mic10 (105 aa).

Residues 29–46 (LLKVTGGVAIGIVASVAF) form a helical membrane-spanning segment. At 47-105 (FKSRSWPIWFGSGVGLGTGWSNCRHDFASPYVLHGKRVPAGQDSQGKPAYNIITEQHKQ) the chain is on the mitochondrial intermembrane side. The interval 85 to 105 (PAGQDSQGKPAYNIITEQHKQ) is disordered.

Belongs to the MICOS complex subunit Mic10 family. In terms of assembly, component of the mitochondrial contact site and cristae organizing system (MICOS) complex.

Its subcellular location is the mitochondrion inner membrane. Its function is as follows. Component of the MICOS complex, a large protein complex of the mitochondrial inner membrane that plays crucial roles in the maintenance of crista junctions, inner membrane architecture, and formation of contact sites to the outer membrane. In Caenorhabditis elegans, this protein is MICOS complex subunit Mic10.